Reading from the N-terminus, the 24-residue chain is Brevinin-1E (24 aa).

A disulfide bridge links Cys-18 with Cys-24.

As to expression, expressed by the skin glands.

The protein localises to the secreted. Functionally, antimicrobial peptide. Stimulates insulin release by BRIN-BD11 cells in vitro. The chain is Brevinin-1E from Pelophylax saharicus (Sahara frog).